The chain runs to 215 residues: Probable phosphoglycerate mutase GpmB (215 aa).

Residues 8–15 (RHGETQWN), 21–22 (QG), R58, K60, 82–85 (ELDM), 104–105 (RR), and 151–152 (GI) contribute to the substrate site. The active-site Tele-phosphohistidine intermediate is H9. The Proton donor/acceptor role is filled by E82.

The protein belongs to the phosphoglycerate mutase family. GpmB subfamily.

It catalyses the reaction (2R)-2-phosphoglycerate = (2R)-3-phosphoglycerate. It participates in carbohydrate degradation; glycolysis; pyruvate from D-glyceraldehyde 3-phosphate: step 3/5. In Salmonella arizonae (strain ATCC BAA-731 / CDC346-86 / RSK2980), this protein is Probable phosphoglycerate mutase GpmB.